The primary structure comprises 455 residues: DENN domain-containing protein 11 (455 aa).

The residue at position 2 (valine 2) is an N-acetylvaline. In terms of domain architecture, uDENN spans 15 to 187 (EGPAVSVPQD…QLEMPGHYSH (173 aa)). The interval 21–61 (VPQDPALQAGGWVRGGSGGGRVAAEAPRRREPEEPAPPEVL) is disordered. A compositionally biased stretch (gly residues) spans 32-41 (WVRGGSGGGR). An Omega-N-methylarginine modification is found at arginine 41. The cDENN domain occupies 214–362 (WLPSIHRYMY…LNSADREKYR (149 aa)). The region spanning 364–455 (LNEQRQMLLY…MLVIDNPCCP (92 aa)) is the dDENN domain.

The protein belongs to the DENND11 family. In terms of tissue distribution, expressed within the somatodendritic compartment of neurons, is also present on dendritic growth cones, but is not found in astrocytes.

Functionally, probable guanine nucleotide exchange factor (GEF). May promote the exchange of GDP to GTP, converting inactive GDP-bound small GTPases into their active GTP-bound form. May play a role in neuritogenesis, as well as in neuronal recovery and/or restructuring in the hippocampus following transient cerebral ischemia. This chain is DENN domain-containing protein 11 (Dennd11), found in Rattus norvegicus (Rat).